A 127-amino-acid chain; its full sequence is Glycine cleavage system H protein (127 aa).

Positions 22–103 (EAYIGITDFA…AFANWIIKVE (82 aa)) constitute a Lipoyl-binding domain. Lysine 63 is subject to N6-lipoyllysine.

The protein belongs to the GcvH family. The glycine cleavage system is composed of four proteins: P, T, L and H. Requires (R)-lipoate as cofactor.

Functionally, the glycine cleavage system catalyzes the degradation of glycine. The H protein shuttles the methylamine group of glycine from the P protein to the T protein. This chain is Glycine cleavage system H protein, found in Alkaliphilus oremlandii (strain OhILAs) (Clostridium oremlandii (strain OhILAs)).